A 1361-amino-acid polypeptide reads, in one-letter code: Protein transport protein SEC16B homolog (1361 aa).

At serine 46 the chain carries Phosphoserine. Disordered stretches follow at residues 82-109, 487-513, 984-1013, 1025-1062, 1163-1204, 1216-1235, and 1306-1361; these read NEGA…HSDA, VDDA…GRPP, PVGG…QEAT, SSLM…GRTP, ENKS…ARGR, NPPG…VQTA, and SVNG…EVEL. Positions 491 to 503 are enriched in low complexity; the sequence is PQSFQSSQLFSPS. Residues 996–1013 are compositionally biased toward polar residues; the sequence is TKGNLQGNEYQHQQQEAT. Polar residues-rich tracts occupy residues 1169 to 1200, 1222 to 1234, and 1308 to 1325; these read IPSN…NQFS, NSHT…SVQT, and NGDN…SWSG. The segment covering 1326–1354 has biased composition (low complexity); the sequence is NFNTSFTPPTSPSTFKPVLLNSSSSSLGE.

It belongs to the SEC16 family.

It localises to the golgi apparatus. It is found in the endoplasmic reticulum. Its function is as follows. Required for protein transport from the endoplasmic reticulum to the Golgi apparatus. This chain is Protein transport protein SEC16B homolog, found in Arabidopsis thaliana (Mouse-ear cress).